Reading from the N-terminus, the 322-residue chain is F-actin-capping protein subunit beta (322 aa).

This sequence belongs to the F-actin-capping protein beta subunit family. Component of the F-actin capping complex, composed of a heterodimer of an alpha and a beta subunit.

It is found in the cytoplasm. Its subcellular location is the cytoskeleton. It localises to the actin patch. Its function is as follows. F-actin-capping proteins bind in a Ca(2+)-independent manner to the fast growing ends of actin filaments (barbed end) thereby blocking the exchange of subunits at these ends. Unlike other capping proteins (such as gelsolin and severin), these proteins do not sever actin filaments. This Aspergillus fumigatus (strain ATCC MYA-4609 / CBS 101355 / FGSC A1100 / Af293) (Neosartorya fumigata) protein is F-actin-capping protein subunit beta (cap2).